A 145-amino-acid chain; its full sequence is QFDAETMTLHHDKHHATYVANANAALEKHPEIGENLKELLADVTKIPADIRQALINNGGGHLNHALFWELLSPEKQEITADVAQAIDEAFGSFDAFKEQFTAAATGRFGSGWAWLVVNKEGQLEITSTANQDTPISEGKKPILAL.

Positions 10 and 64 each coordinate Fe(3+). His10 and His64 together coordinate Mn(2+).

Belongs to the iron/manganese superoxide dismutase family. It depends on Mn(2+) as a cofactor. The cofactor is Fe(3+).

The enzyme catalyses 2 superoxide + 2 H(+) = H2O2 + O2. Its function is as follows. Destroys superoxide anion radicals which are normally produced within the cells and which are toxic to biological systems. Catalyzes the dismutation of superoxide anion radicals into O2 and H2O2 by successive reduction and oxidation of the transition metal ion at the active site. This chain is Superoxide dismutase [Mn/Fe] (sodA), found in Streptococcus canis.